We begin with the raw amino-acid sequence, 178 residues long: Oligoribonuclease (178 aa).

In terms of domain architecture, Exonuclease spans 7–168 (LIWIDLEMTG…DDIRESIAEL (162 aa)). The active site involves Tyr128.

The protein belongs to the oligoribonuclease family.

The protein resides in the cytoplasm. 3'-to-5' exoribonuclease specific for small oligoribonucleotides. The sequence is that of Oligoribonuclease from Francisella tularensis subsp. novicida (strain U112).